The following is a 33-amino-acid chain: Cytochrome b6-f complex subunit 8 (33 aa).

A helical membrane pass occupies residues 2–22 (LFTVAWASLAAMFSFSIAMVV).

Belongs to the PetN family. In terms of assembly, the 4 large subunits of the cytochrome b6-f complex are cytochrome b6, subunit IV (17 kDa polypeptide, PetD), cytochrome f and the Rieske protein, while the 4 small subunits are PetG, PetL, PetM and PetN. The complex functions as a dimer.

It is found in the cellular thylakoid membrane. Its function is as follows. Component of the cytochrome b6-f complex, which mediates electron transfer between photosystem II (PSII) and photosystem I (PSI), cyclic electron flow around PSI, and state transitions. This Synechococcus sp. (strain CC9902) protein is Cytochrome b6-f complex subunit 8.